A 411-amino-acid polypeptide reads, in one-letter code: LL-diaminopimelate aminotransferase (411 aa).

Substrate-binding residues include tyrosine 15 and glycine 42. Pyridoxal 5'-phosphate contacts are provided by residues tyrosine 72, 108–109 (SK), tyrosine 132, asparagine 187, tyrosine 218, and 246–248 (SFS). Residues lysine 109, tyrosine 132, and asparagine 187 each coordinate substrate. At lysine 249 the chain carries N6-(pyridoxal phosphate)lysine. 2 residues coordinate pyridoxal 5'-phosphate: arginine 257 and asparagine 292. Substrate contacts are provided by asparagine 292 and arginine 388.

The protein belongs to the class-I pyridoxal-phosphate-dependent aminotransferase family. LL-diaminopimelate aminotransferase subfamily. As to quaternary structure, homodimer. It depends on pyridoxal 5'-phosphate as a cofactor.

The catalysed reaction is (2S,6S)-2,6-diaminopimelate + 2-oxoglutarate = (S)-2,3,4,5-tetrahydrodipicolinate + L-glutamate + H2O + H(+). It participates in amino-acid biosynthesis; L-lysine biosynthesis via DAP pathway; LL-2,6-diaminopimelate from (S)-tetrahydrodipicolinate (aminotransferase route): step 1/1. Its function is as follows. Involved in the synthesis of meso-diaminopimelate (m-DAP or DL-DAP), required for both lysine and peptidoglycan biosynthesis. Catalyzes the direct conversion of tetrahydrodipicolinate to LL-diaminopimelate. The sequence is that of LL-diaminopimelate aminotransferase from Synechococcus sp. (strain JA-3-3Ab) (Cyanobacteria bacterium Yellowstone A-Prime).